Here is an 861-residue protein sequence, read N- to C-terminus: Putative glutamate--cysteine ligase 2-2 (861 aa).

A carboxylate-amine ligase region spans residues 1–372; it reads MSDARIVAVG…RDVPPAGAAA (372 aa). The tract at residues 373–861 is unknown; sequence ALGSAPAVSA…GSKDTWIPRR (489 aa).

This sequence in the N-terminal section; belongs to the glutamate--cysteine ligase type 2 family. YbdK subfamily.

It carries out the reaction L-cysteine + L-glutamate + ATP = gamma-L-glutamyl-L-cysteine + ADP + phosphate + H(+). Functionally, ATP-dependent carboxylate-amine ligase which exhibits weak glutamate--cysteine ligase activity. The protein is Putative glutamate--cysteine ligase 2-2 of Frankia casuarinae (strain DSM 45818 / CECT 9043 / HFP020203 / CcI3).